Consider the following 1127-residue polypeptide: Disease resistance protein RPS6 (1127 aa).

Met-1 is subject to N-acetylmethionine. One can recognise a TIR domain in the interval 12–176 (WSYHVFPSFS…EIANDILGKM (165 aa)). Glu-87 is a catalytic residue. The NB-ARC domain maps to 191-452 (EDHITKMSSL…HIACIFNGEK (262 aa)). LRR repeat units lie at residues 197-221 (MSSL…GIGK), 540-563 (IDET…LFLK), 587-609 (PSRL…NFHP), 610-632 (ENLV…VHSL), 633-656 (AGLR…SMAT), 658-679 (LETL…IQYL), 680-704 (NKLN…NLKS), 766-790 (SPTL…IQNL), 791-813 (YQLE…GINL), 814-834 (DSLI…PDIS), and 835-857 (TNIS…IEKL).

As to quaternary structure, interacts with EDS1. In terms of tissue distribution, ubiquitous.

It carries out the reaction NAD(+) + H2O = ADP-D-ribose + nicotinamide + H(+). Disease resistance (R) protein that specifically recognizes the hopA1 type III effector avirulence protein from Pseudomonas syringae. Resistance proteins guard the plant against pathogens that contain an appropriate avirulence protein via an indirect interaction with this avirulence protein. That triggers a defense system including the hypersensitive response, which restricts the pathogen growth. In Arabidopsis thaliana (Mouse-ear cress), this protein is Disease resistance protein RPS6 (RPS6).